The primary structure comprises 230 residues: Cytochrome c oxidase subunit 2 (230 aa).

The Mitochondrial intermembrane segment spans residues 1-14; sequence MAHPTQLGFKDAAM. A helical transmembrane segment spans residues 15 to 45; the sequence is PVMEELLHFHDHALMIVLLISTLVLYIITAM. Over 46 to 59 the chain is Mitochondrial matrix; that stretch reads VSTKLTNKYILDSQ. A helical membrane pass occupies residues 60–87; it reads EIEIVWTILPAVILVLIALPSLRILYLM. The Mitochondrial intermembrane portion of the chain corresponds to 88–230; it reads DEINDPHLTI…NWSSLMLEDA (143 aa). His-161, Cys-196, Glu-198, Cys-200, His-204, and Met-207 together coordinate Cu cation. Glu-198 contributes to the Mg(2+) binding site.

This sequence belongs to the cytochrome c oxidase subunit 2 family. Component of the cytochrome c oxidase (complex IV, CIV), a multisubunit enzyme composed of 14 subunits. The complex is composed of a catalytic core of 3 subunits MT-CO1, MT-CO2 and MT-CO3, encoded in the mitochondrial DNA, and 11 supernumerary subunits COX4I, COX5A, COX5B, COX6A, COX6B, COX6C, COX7A, COX7B, COX7C, COX8 and NDUFA4, which are encoded in the nuclear genome. The complex exists as a monomer or a dimer and forms supercomplexes (SCs) in the inner mitochondrial membrane with NADH-ubiquinone oxidoreductase (complex I, CI) and ubiquinol-cytochrome c oxidoreductase (cytochrome b-c1 complex, complex III, CIII), resulting in different assemblies (supercomplex SCI(1)III(2)IV(1) and megacomplex MCI(2)III(2)IV(2)). Found in a complex with TMEM177, COA6, COX18, COX20, SCO1 and SCO2. Interacts with TMEM177 in a COX20-dependent manner. Interacts with COX20. Interacts with COX16. It depends on Cu cation as a cofactor.

Its subcellular location is the mitochondrion inner membrane. It catalyses the reaction 4 Fe(II)-[cytochrome c] + O2 + 8 H(+)(in) = 4 Fe(III)-[cytochrome c] + 2 H2O + 4 H(+)(out). In terms of biological role, component of the cytochrome c oxidase, the last enzyme in the mitochondrial electron transport chain which drives oxidative phosphorylation. The respiratory chain contains 3 multisubunit complexes succinate dehydrogenase (complex II, CII), ubiquinol-cytochrome c oxidoreductase (cytochrome b-c1 complex, complex III, CIII) and cytochrome c oxidase (complex IV, CIV), that cooperate to transfer electrons derived from NADH and succinate to molecular oxygen, creating an electrochemical gradient over the inner membrane that drives transmembrane transport and the ATP synthase. Cytochrome c oxidase is the component of the respiratory chain that catalyzes the reduction of oxygen to water. Electrons originating from reduced cytochrome c in the intermembrane space (IMS) are transferred via the dinuclear copper A center (CU(A)) of subunit 2 and heme A of subunit 1 to the active site in subunit 1, a binuclear center (BNC) formed by heme A3 and copper B (CU(B)). The BNC reduces molecular oxygen to 2 water molecules using 4 electrons from cytochrome c in the IMS and 4 protons from the mitochondrial matrix. The sequence is that of Cytochrome c oxidase subunit 2 (mt-co2) from Cyprinus carpio (Common carp).